Here is a 450-residue protein sequence, read N- to C-terminus: Putative nucleolar protein 5-3 (450 aa).

In terms of domain architecture, Nop spans 252–370; that stretch reads IAPNLTALVG…LEARLRNLEG (119 aa). The interval 375 to 423 is disordered; it reads ACEEEEEVNDKDTKKEADDEEEPKTEECSKKRKKEAELETVEDPAKKSK. Residues 399–423 are compositionally biased toward basic and acidic residues; it reads TEECSKKRKKEAELETVEDPAKKSK.

The protein belongs to the NOP5/NOP56 family.

It is found in the nucleus. Its subcellular location is the nucleolus. In terms of biological role, required for 60S ribosomal subunit biogenesis. In Arabidopsis thaliana (Mouse-ear cress), this protein is Putative nucleolar protein 5-3 (NOP5-3).